Consider the following 240-residue polypeptide: Phosphatidylserine decarboxylase proenzyme (240 aa).

Catalysis depends on serine 209, which acts as the Schiff-base intermediate with substrate; via pyruvic acid. Position 209 is a pyruvic acid (Ser); by autocatalysis (serine 209).

Belongs to the phosphatidylserine decarboxylase family. PSD-A subfamily. In terms of assembly, heterodimer of a large membrane-associated beta subunit and a small pyruvoyl-containing alpha subunit. Requires pyruvate as cofactor. Post-translationally, is synthesized initially as an inactive proenzyme. Formation of the active enzyme involves a self-maturation process in which the active site pyruvoyl group is generated from an internal serine residue via an autocatalytic post-translational modification. Two non-identical subunits are generated from the proenzyme in this reaction, and the pyruvate is formed at the N-terminus of the alpha chain, which is derived from the carboxyl end of the proenzyme. The post-translation cleavage follows an unusual pathway, termed non-hydrolytic serinolysis, in which the side chain hydroxyl group of the serine supplies its oxygen atom to form the C-terminus of the beta chain, while the remainder of the serine residue undergoes an oxidative deamination to produce ammonia and the pyruvoyl prosthetic group on the alpha chain.

Its subcellular location is the cell membrane. The catalysed reaction is a 1,2-diacyl-sn-glycero-3-phospho-L-serine + H(+) = a 1,2-diacyl-sn-glycero-3-phosphoethanolamine + CO2. It functions in the pathway phospholipid metabolism; phosphatidylethanolamine biosynthesis; phosphatidylethanolamine from CDP-diacylglycerol: step 2/2. In terms of biological role, catalyzes the formation of phosphatidylethanolamine (PtdEtn) from phosphatidylserine (PtdSer). This chain is Phosphatidylserine decarboxylase proenzyme, found in Mycobacterium marinum (strain ATCC BAA-535 / M).